We begin with the raw amino-acid sequence, 125 residues long: Large ribosomal subunit protein bL12 (125 aa).

The protein belongs to the bacterial ribosomal protein bL12 family. As to quaternary structure, homodimer. Part of the ribosomal stalk of the 50S ribosomal subunit. Forms a multimeric L10(L12)X complex, where L10 forms an elongated spine to which 2 to 4 L12 dimers bind in a sequential fashion. Binds GTP-bound translation factors.

Functionally, forms part of the ribosomal stalk which helps the ribosome interact with GTP-bound translation factors. Is thus essential for accurate translation. This Parabacteroides distasonis (strain ATCC 8503 / DSM 20701 / CIP 104284 / JCM 5825 / NCTC 11152) protein is Large ribosomal subunit protein bL12.